We begin with the raw amino-acid sequence, 446 residues long: Probable glycine dehydrogenase (decarboxylating) subunit 1 (446 aa).

This sequence belongs to the GcvP family. N-terminal subunit subfamily. As to quaternary structure, the glycine cleavage system is composed of four proteins: P, T, L and H. In this organism, the P 'protein' is a heterodimer of two subunits.

The catalysed reaction is N(6)-[(R)-lipoyl]-L-lysyl-[glycine-cleavage complex H protein] + glycine + H(+) = N(6)-[(R)-S(8)-aminomethyldihydrolipoyl]-L-lysyl-[glycine-cleavage complex H protein] + CO2. In terms of biological role, the glycine cleavage system catalyzes the degradation of glycine. The P protein binds the alpha-amino group of glycine through its pyridoxal phosphate cofactor; CO(2) is released and the remaining methylamine moiety is then transferred to the lipoamide cofactor of the H protein. The protein is Probable glycine dehydrogenase (decarboxylating) subunit 1 of Xanthobacter autotrophicus (strain ATCC BAA-1158 / Py2).